Consider the following 420-residue polypeptide: Tyrosine--tRNA ligase 2 (420 aa).

Tyr34 serves as a coordination point for L-tyrosine. Residues 39–48 (PTGDSMHIGH) carry the 'HIGH' region motif. Positions 168 and 172 each coordinate L-tyrosine. The 'KMSKS' region motif lies at 230 to 234 (KFGKS). Lys233 provides a ligand contact to ATP. An S4 RNA-binding domain is found at 352–418 (KNIVEWLVDL…GKKNYSLVKL (67 aa)).

It belongs to the class-I aminoacyl-tRNA synthetase family. TyrS type 1 subfamily. Homodimer.

The protein localises to the cytoplasm. The enzyme catalyses tRNA(Tyr) + L-tyrosine + ATP = L-tyrosyl-tRNA(Tyr) + AMP + diphosphate + H(+). Functionally, catalyzes the attachment of tyrosine to tRNA(Tyr) in a two-step reaction: tyrosine is first activated by ATP to form Tyr-AMP and then transferred to the acceptor end of tRNA(Tyr). This is Tyrosine--tRNA ligase 2 from Bacillus cereus (strain ATCC 14579 / DSM 31 / CCUG 7414 / JCM 2152 / NBRC 15305 / NCIMB 9373 / NCTC 2599 / NRRL B-3711).